A 123-amino-acid polypeptide reads, in one-letter code: UPF0738 protein BCE33L1094 (123 aa).

It belongs to the UPF0738 family.

The polypeptide is UPF0738 protein BCE33L1094 (Bacillus cereus (strain ZK / E33L)).